A 150-amino-acid chain; its full sequence is Lipoprotein signal peptidase (150 aa).

3 helical membrane passes run 8–28 (FYAL…LAHA), 58–78 (GFSW…GWFL), and 81–101 (TTGS…NVFD). Catalysis depends on residues Asp-116 and Asp-132. Residues 126-146 (VVFNIADLFILAGVFGTFLFL) form a helical membrane-spanning segment.

It belongs to the peptidase A8 family.

The protein localises to the cell membrane. It carries out the reaction Release of signal peptides from bacterial membrane prolipoproteins. Hydrolyzes -Xaa-Yaa-Zaa-|-(S,diacylglyceryl)Cys-, in which Xaa is hydrophobic (preferably Leu), and Yaa (Ala or Ser) and Zaa (Gly or Ala) have small, neutral side chains.. Its pathway is protein modification; lipoprotein biosynthesis (signal peptide cleavage). Its function is as follows. This protein specifically catalyzes the removal of signal peptides from prolipoproteins. This is Lipoprotein signal peptidase from Tropheryma whipplei (strain Twist) (Whipple's bacillus).